The chain runs to 553 residues: Solute carrier family 45 member 3 (553 aa).

Transmembrane regions (helical) follow at residues Leu-19–Val-39, Phe-52–Gly-72, Phe-88–Trp-108, Leu-120–Phe-140, Tyr-161–Ile-181, Cys-198–Ala-218, Phe-275–Phe-295, Met-323–Asp-343, Ala-353–His-373, Ala-382–Leu-402, and Ala-522–Val-542.

The protein belongs to the glycoside-pentoside-hexuronide (GPH) cation symporter transporter (TC 2.A.2) family. As to expression, prostate specific. Expressed in all prostatic glandular cells. Expressed both in normal and cancerous prostates.

Its subcellular location is the membrane. The enzyme catalyses sucrose(out) + H(+)(out) = sucrose(in) + H(+)(in). In terms of biological role, proton-associated sucrose transporter. May be able to transport also glucose and fructose. The protein is Solute carrier family 45 member 3 of Homo sapiens (Human).